We begin with the raw amino-acid sequence, 162 residues long: Phosphopantetheine adenylyltransferase (162 aa).

Thr-9 contributes to the substrate binding site. Residues 9–10 (TF) and His-17 contribute to the ATP site. 3 residues coordinate substrate: Lys-41, Leu-76, and Arg-90. ATP contacts are provided by residues 91-93 (GLR), Glu-101, and 126-132 (HQAIASR).

This sequence belongs to the bacterial CoaD family. Homohexamer. Mg(2+) is required as a cofactor.

It localises to the cytoplasm. The catalysed reaction is (R)-4'-phosphopantetheine + ATP + H(+) = 3'-dephospho-CoA + diphosphate. Its pathway is cofactor biosynthesis; coenzyme A biosynthesis; CoA from (R)-pantothenate: step 4/5. Reversibly transfers an adenylyl group from ATP to 4'-phosphopantetheine, yielding dephospho-CoA (dPCoA) and pyrophosphate. This Caulobacter sp. (strain K31) protein is Phosphopantetheine adenylyltransferase.